Consider the following 192-residue polypeptide: Thymidine kinase (192 aa).

Residues serine 9–serine 16 and aspartate 87–glutamine 90 contribute to the ATP site. Residue glutamate 88 is the Proton acceptor of the active site. Zn(2+) is bound by residues cysteine 145, cysteine 147, cysteine 182, and histidine 185.

Belongs to the thymidine kinase family. As to quaternary structure, homotetramer.

It localises to the cytoplasm. It carries out the reaction thymidine + ATP = dTMP + ADP + H(+). This Shewanella oneidensis (strain ATCC 700550 / JCM 31522 / CIP 106686 / LMG 19005 / NCIMB 14063 / MR-1) protein is Thymidine kinase.